The chain runs to 131 residues: Protein FAM107B (131 aa).

Ala-2 carries the post-translational modification N-acetylalanine. Residues 39-79 (MNQKRGLAPQNKPELQKVMEKRRRDQVIKQKEEEAQKKKSD) form a disordered region. Lys-50 carries the post-translational modification N6-acetyllysine. Positions 52–79 (ELQKVMEKRRRDQVIKQKEEEAQKKKSD) are enriched in basic and acidic residues. The stretch at 61–112 (RRDQVIKQKEEEAQKKKSDLEIELLKRQQKLEQLELEKQKLQEEQENAPEFV) forms a coiled coil.

Belongs to the FAM107 family. As to expression, expressed in the hippocampus and hypothalamus. Expressed in the pontine nuclei and reticulotegmental nucleus. Expressed in Purkinje cell and nuclear layers of the cerebelum. Expressed in the choroid plexus. Expressed in hippocampal granule neurons of the dente gyrus.

This Mus musculus (Mouse) protein is Protein FAM107B.